A 104-amino-acid polypeptide reads, in one-letter code: Large ribosomal subunit protein bL21 (104 aa).

The protein belongs to the bacterial ribosomal protein bL21 family. As to quaternary structure, part of the 50S ribosomal subunit. Contacts protein L20.

Its function is as follows. This protein binds to 23S rRNA in the presence of protein L20. This Alkalilimnicola ehrlichii (strain ATCC BAA-1101 / DSM 17681 / MLHE-1) protein is Large ribosomal subunit protein bL21.